We begin with the raw amino-acid sequence, 397 residues long: 1-deoxy-D-xylulose 5-phosphate reductoisomerase (397 aa).

The NADPH site is built by threonine 10, glycine 11, serine 12, isoleucine 13, asparagine 39, and asparagine 125. Residue lysine 126 participates in 1-deoxy-D-xylulose 5-phosphate binding. Position 127 (glutamate 127) interacts with NADPH. Aspartate 151 contributes to the Mn(2+) binding site. Serine 152, glutamate 153, serine 187, and histidine 210 together coordinate 1-deoxy-D-xylulose 5-phosphate. Mn(2+) is bound at residue glutamate 153. Glycine 216 contributes to the NADPH binding site. Positions 223, 228, 229, and 232 each coordinate 1-deoxy-D-xylulose 5-phosphate. Position 232 (glutamate 232) interacts with Mn(2+).

This sequence belongs to the DXR family. In terms of assembly, homodimer. Requires Mg(2+) as cofactor. Mn(2+) is required as a cofactor.

It catalyses the reaction 2-C-methyl-D-erythritol 4-phosphate + NADP(+) = 1-deoxy-D-xylulose 5-phosphate + NADPH + H(+). Its pathway is isoprenoid biosynthesis; isopentenyl diphosphate biosynthesis via DXP pathway; isopentenyl diphosphate from 1-deoxy-D-xylulose 5-phosphate: step 1/6. Functionally, catalyzes the NADPH-dependent rearrangement and reduction of 1-deoxy-D-xylulose-5-phosphate (DXP) to 2-C-methyl-D-erythritol 4-phosphate (MEP). The chain is 1-deoxy-D-xylulose 5-phosphate reductoisomerase from Wigglesworthia glossinidia brevipalpis.